A 249-amino-acid polypeptide reads, in one-letter code: DNA repair protein RecO (249 aa).

It belongs to the RecO family.

Functionally, involved in DNA repair and RecF pathway recombination. This is DNA repair protein RecO from Exiguobacterium sp. (strain ATCC BAA-1283 / AT1b).